The primary structure comprises 493 residues: Sulfoacetaldehyde dehydrogenase (acylating) (493 aa).

Basic residues predominate over residues 1–10; the sequence is MSVQILHRRQ. Residues 1–21 are disordered; sequence MSVQILHRRQSNNSDLPLPTA. Cys273 functions as the Nucleophile in the catalytic mechanism.

It belongs to the aldehyde dehydrogenase family. Homodimer.

It is found in the cytoplasm. The catalysed reaction is sulfoacetaldehyde + NADP(+) + CoA = sulfoacetyl-CoA + NADPH + H(+). Its function is as follows. Involved in the degradation of sulfoacetate, a widespread natural product. Catalyzes the conversion of sulfoacetyl-CoA and NADPH to sulfoacetaldehyde, CoA and NADP(+). Specific for NADP(+) and sulfoacetaldehyde. This Cupriavidus necator (strain ATCC 17699 / DSM 428 / KCTC 22496 / NCIMB 10442 / H16 / Stanier 337) (Ralstonia eutropha) protein is Sulfoacetaldehyde dehydrogenase (acylating).